A 278-amino-acid chain; its full sequence is Sulfur carrier protein FdhD (278 aa).

Cysteine 120 acts as the Cysteine persulfide intermediate in catalysis.

This sequence belongs to the FdhD family.

It localises to the cytoplasm. Functionally, required for formate dehydrogenase (FDH) activity. Acts as a sulfur carrier protein that transfers sulfur from IscS to the molybdenum cofactor prior to its insertion into FDH. The chain is Sulfur carrier protein FdhD from Bordetella petrii (strain ATCC BAA-461 / DSM 12804 / CCUG 43448).